Reading from the N-terminus, the 913-residue chain is ER degradation-enhancing alpha-mannosidase-like protein 3 (913 aa).

Positions Met1 to Trp15 are cleaved as a signal peptide. The N-linked (GlcNAc...) asparagine glycan is linked to Asn104. Glu132 functions as the Proton donor in the catalytic mechanism. A glycan (N-linked (GlcNAc...) asparagine) is linked at Asn181. Residue Asp279 is part of the active site. Catalysis depends on Glu373, which acts as the Proton donor. Glu391 is an active-site residue. Ca(2+) is bound at residue Thr477. A glycan (N-linked (GlcNAc...) asparagine) is linked at Asn497. Residues Leu660–Ile766 form the PA domain. An N-linked (GlcNAc...) asparagine glycan is attached at Asn797. A disordered region spans residues Glu823–Leu895. A compositionally biased stretch (low complexity) spans Pro826 to Ser839. Positions Arg843–Lys866 are enriched in basic and acidic residues. Positions Lys910–Leu913 match the Prevents secretion from ER motif.

Belongs to the glycosyl hydrolase 47 family. It depends on Ca(2+) as a cofactor.

The protein resides in the endoplasmic reticulum lumen. The enzyme catalyses N(4)-(alpha-D-Man-(1-&gt;2)-alpha-D-Man-(1-&gt;2)-alpha-D-Man-(1-&gt;3)-[alpha-D-Man-(1-&gt;2)-alpha-D-Man-(1-&gt;3)-[alpha-D-Man-(1-&gt;2)-alpha-D-Man-(1-&gt;6)]-alpha-D-Man-(1-&gt;6)]-beta-D-Man-(1-&gt;4)-beta-D-GlcNAc-(1-&gt;4)-beta-D-GlcNAc)-L-asparaginyl-[protein] (N-glucan mannose isomer 9A1,2,3B1,2,3) + 4 H2O = N(4)-(alpha-D-Man-(1-&gt;3)-[alpha-D-Man-(1-&gt;3)-[alpha-D-Man-(1-&gt;6)]-alpha-D-Man-(1-&gt;6)]-beta-D-Man-(1-&gt;4)-beta-D-GlcNAc-(1-&gt;4)-beta-D-GlcNAc)-L-asparaginyl-[protein] (N-glucan mannose isomer 5A1,2) + 4 beta-D-mannose. The catalysed reaction is N(4)-(alpha-D-Man-(1-&gt;2)-alpha-D-Man-(1-&gt;2)-alpha-D-Man-(1-&gt;3)-[alpha-D-Man-(1-&gt;3)-[alpha-D-Man-(1-&gt;2)-alpha-D-Man-(1-&gt;6)]-alpha-D-Man-(1-&gt;6)]-beta-D-Man-(1-&gt;4)-beta-D-GlcNAc-(1-&gt;4)-beta-D-GlcNAc)-L-asparaginyl-[protein] (N-glucan mannose isomer 8A1,2,3B1,3) + 3 H2O = N(4)-(alpha-D-Man-(1-&gt;3)-[alpha-D-Man-(1-&gt;3)-[alpha-D-Man-(1-&gt;6)]-alpha-D-Man-(1-&gt;6)]-beta-D-Man-(1-&gt;4)-beta-D-GlcNAc-(1-&gt;4)-beta-D-GlcNAc)-L-asparaginyl-[protein] (N-glucan mannose isomer 5A1,2) + 3 beta-D-mannose. Its pathway is protein modification; protein glycosylation. Functionally, may be involved in endoplasmic reticulum-associated degradation (ERAD). This chain is ER degradation-enhancing alpha-mannosidase-like protein 3 (edem3), found in Xenopus laevis (African clawed frog).